The primary structure comprises 514 residues: 2,3-bisphosphoglycerate-independent phosphoglycerate mutase (514 aa).

Residues aspartate 14 and serine 64 each contribute to the Mn(2+) site. Residue serine 64 is the Phosphoserine intermediate of the active site. Substrate-binding positions include histidine 125, 155-156, arginine 187, arginine 193, 263-266, and lysine 336; these read RD and RADR. Mn(2+) contacts are provided by aspartate 403, histidine 407, aspartate 444, histidine 445, and histidine 463.

The protein belongs to the BPG-independent phosphoglycerate mutase family. As to quaternary structure, monomer. Mn(2+) is required as a cofactor.

It catalyses the reaction (2R)-2-phosphoglycerate = (2R)-3-phosphoglycerate. Its pathway is carbohydrate degradation; glycolysis; pyruvate from D-glyceraldehyde 3-phosphate: step 3/5. Functionally, catalyzes the interconversion of 2-phosphoglycerate and 3-phosphoglycerate. This Shewanella oneidensis (strain ATCC 700550 / JCM 31522 / CIP 106686 / LMG 19005 / NCIMB 14063 / MR-1) protein is 2,3-bisphosphoglycerate-independent phosphoglycerate mutase.